The primary structure comprises 451 residues: uncharacterized protein (451 aa).

The next 5 helical transmembrane spans lie at 11–31 (VLLK…YIDL), 56–76 (IQIY…SIGT), 151–171 (IIGI…NIYL), 175–195 (FWLI…LIIF), and 207–227 (VYSV…TIKI). Residues 250–300 (TKSNNNNNNNNNNKQDDNIIYDTDSSFNGQSSSSSSSSSSSSSSSSSATTT) form a disordered region. Composition is skewed to low complexity over residues 253 to 262 (NNNNNNNNNN) and 280 to 300 (SSSS…ATTT). Helical transmembrane passes span 392 to 412 (FVGV…SDYS) and 413 to 433 (LLTI…LTYL).

The protein resides in the membrane. This is an uncharacterized protein from Dictyostelium discoideum (Social amoeba).